The chain runs to 165 residues: Large ribosomal subunit protein uL5 (165 aa).

It belongs to the universal ribosomal protein uL5 family. In terms of assembly, part of the 50S ribosomal subunit; contacts the 5S rRNA and probably tRNA. Forms a bridge to the 30S subunit in the 70S ribosome.

This is one of the proteins that bind and probably mediate the attachment of the 5S RNA into the large ribosomal subunit, where it forms part of the central protuberance. In the 70S ribosome it contacts protein S13 of the 30S subunit (bridge B1b), connecting the 2 subunits; this bridge is implicated in subunit movement. May contact the P site tRNA; the 5S rRNA and some of its associated proteins might help stabilize positioning of ribosome-bound tRNAs. The sequence is that of Large ribosomal subunit protein uL5 from Methanoregula boonei (strain DSM 21154 / JCM 14090 / 6A8).